Reading from the N-terminus, the 364-residue chain is MIRAFDAFSLPLLRLLDAEDAHRLAIQGLRLLPQVKPRPDDSKLAVRAFGLNFPNPVGIAAGFDKNAEAPDALLRLGFGFVEIGTVTPKPQAGNPRPRLFRLERDEAIINRMGFNNDGAEAVLRRLAARAQQGGIVGVNVGANKDSTDRVADYVSLIETFAPVASYFTVNVSSPNTPGLRNLQQAAALDDLLARVIEARERVRASAGDTPVLLKIAPDLTLSELDDVVHIARSRRVDGMIVANTTLSRSPMLRERTRLNEQGGLSGRPLFRLSTRMVAETYVRAEGAFPLIGVGGIDSGGAALTKIRAGASLVQLYSALIYKGLGLVDSIKADLASTLLRTGRDSLSEIVGADAPTITAEEWPV.

FMN-binding positions include 61-65 and T85; that span reads AGFDK. K65 contributes to the substrate binding site. Residue 110–114 coordinates substrate; the sequence is NRMGF. The FMN site is built by N139 and N170. Substrate is bound at residue N170. S173 serves as the catalytic Nucleophile. N175 serves as a coordination point for substrate. FMN is bound by residues K214 and A242. 243-244 serves as a coordination point for substrate; it reads NT. FMN is bound by residues G266, G295, and 316-317; that span reads YS.

Belongs to the dihydroorotate dehydrogenase family. Type 2 subfamily. Monomer. Requires FMN as cofactor.

It is found in the cell membrane. It carries out the reaction (S)-dihydroorotate + a quinone = orotate + a quinol. Its pathway is pyrimidine metabolism; UMP biosynthesis via de novo pathway; orotate from (S)-dihydroorotate (quinone route): step 1/1. Its function is as follows. Catalyzes the conversion of dihydroorotate to orotate with quinone as electron acceptor. The protein is Dihydroorotate dehydrogenase (quinone) of Rhodopseudomonas palustris (strain HaA2).